A 281-amino-acid chain; its full sequence is NADPH-dependent 7-cyano-7-deazaguanine reductase (281 aa).

Residue 87–89 (IES) participates in substrate binding. 89-90 (SK) is a binding site for NADPH. The active-site Thioimide intermediate is Cys188. The active-site Proton donor is the Asp195. 227–228 (HE) contacts substrate. 256–257 (RG) contributes to the NADPH binding site. The disordered stretch occupies residues 261–281 (INPYRSTEQAKPDHNHRMARQ). Over residues 268-281 (EQAKPDHNHRMARQ) the composition is skewed to basic and acidic residues.

Belongs to the GTP cyclohydrolase I family. QueF type 2 subfamily. In terms of assembly, homodimer.

The protein resides in the cytoplasm. The enzyme catalyses 7-aminomethyl-7-carbaguanine + 2 NADP(+) = 7-cyano-7-deazaguanine + 2 NADPH + 3 H(+). The protein operates within tRNA modification; tRNA-queuosine biosynthesis. Its function is as follows. Catalyzes the NADPH-dependent reduction of 7-cyano-7-deazaguanine (preQ0) to 7-aminomethyl-7-deazaguanine (preQ1). The polypeptide is NADPH-dependent 7-cyano-7-deazaguanine reductase (Vibrio vulnificus (strain CMCP6)).